A 367-amino-acid chain; its full sequence is Alginate lyase (367 aa).

An N-terminal signal peptide occupies residues Met1–Ala24. Residues Ser63–Lys64, His136–Thr137, and Tyr254 contribute to the substrate site.

This sequence belongs to the polysaccharide lyase 5 family.

It localises to the periplasm. It catalyses the reaction Eliminative cleavage of alginate to give oligosaccharides with 4-deoxy-alpha-L-erythro-hex-4-enuronosyl groups at their non-reducing ends and beta-D-mannuronate at their reducing end.. Catalyzes the depolymerization of alginate by cleaving the beta-1,4 glycosidic bond between two adjacent sugar residues via a beta-elimination mechanism. May serve to degrade mislocalized alginate that is trapped in the periplasmic space. The protein is Alginate lyase of Pseudomonas putida (strain W619).